We begin with the raw amino-acid sequence, 100 residues long: Ubiquinol-cytochrome-C reductase complex subunit IX, mitochondrial (100 aa).

The transit peptide at 1–30 (MQTHVRRVALQALRPCLRAGLMAPKFPVRF) directs the protein to the mitochondrion. The helical transmembrane segment at 66–86 (LLMRLFFAFVAYVVAMKVFGA) threads the bilayer.

Plants bc1 complex contains 10 subunits; 3 respiratory subunits, 2 core proteins and 5 low-molecular weight proteins.

It is found in the mitochondrion inner membrane. This is a component of the ubiquinol-cytochrome c reductase complex (complex III or cytochrome b-c1 complex), which is part of the mitochondrial respiratory chain. This chain is Ubiquinol-cytochrome-C reductase complex subunit IX, mitochondrial, found in Euglena gracilis.